A 432-amino-acid chain; its full sequence is Short/branched chain specific acyl-CoA dehydrogenase, mitochondrial (432 aa).

A mitochondrion-targeting transit peptide spans 1-33 (MEGLAVRLLRGSRLLRRNFPTCLSSWKIPPHVS). Lys70 carries the post-translational modification N6-acetyllysine; alternate. The residue at position 70 (Lys70) is an N6-succinyllysine; alternate. FAD-binding positions include 174-183 (FCLSEAGAGS) and 207-209 (WIS). Residue Ser183 coordinates substrate. Ser183 is modified (phosphoserine). Substrate contacts are provided by Tyr229 and Tyr283. Position 284 is an N6-acetyllysine; alternate (Lys284). Lys284 bears the N6-succinyllysine; alternate mark. 291–294 (NEGR) contributes to the substrate binding site. FAD contacts are provided by residues Arg319, Gln330, and 387–391 (EWMGG). The active-site Proton acceptor is Glu414. FAD is bound at residue 416-418 (ASN). Lys426 is subject to N6-acetyllysine.

This sequence belongs to the acyl-CoA dehydrogenase family. In terms of assembly, homotetramer. It depends on FAD as a cofactor.

It is found in the mitochondrion matrix. The enzyme catalyses 2-methylbutanoyl-CoA + oxidized [electron-transfer flavoprotein] + H(+) = (2E)-2-methylbut-2-enoyl-CoA + reduced [electron-transfer flavoprotein]. It catalyses the reaction (2S)-2-methylbutanoyl-CoA + oxidized [electron-transfer flavoprotein] + H(+) = (2E)-2-methylbut-2-enoyl-CoA + reduced [electron-transfer flavoprotein]. The catalysed reaction is (2R)-2-methylbutanoyl-CoA + oxidized [electron-transfer flavoprotein] + H(+) = ethylacryloyl-CoA + reduced [electron-transfer flavoprotein]. It carries out the reaction butanoyl-CoA + oxidized [electron-transfer flavoprotein] + H(+) = (2E)-butenoyl-CoA + reduced [electron-transfer flavoprotein]. The enzyme catalyses 2-methylpropanoyl-CoA + oxidized [electron-transfer flavoprotein] + H(+) = 2-methylpropenoyl-CoA + reduced [electron-transfer flavoprotein]. It catalyses the reaction hexanoyl-CoA + oxidized [electron-transfer flavoprotein] + H(+) = (2E)-hexenoyl-CoA + reduced [electron-transfer flavoprotein]. The catalysed reaction is valproyl-CoA + oxidized [electron-transfer flavoprotein] + H(+) = (2E)-2-propylpent-2-enoyl-CoA + reduced [electron-transfer flavoprotein]. The protein operates within lipid metabolism; mitochondrial fatty acid beta-oxidation. It participates in amino-acid degradation; L-isoleucine degradation. Short and branched chain specific acyl-CoA dehydrogenase that catalyzes the removal of one hydrogen from C-2 and C-3 of the fatty acyl-CoA thioester, resulting in the formation of trans-2-enoyl-CoA. Among the different mitochondrial acyl-CoA dehydrogenases, acts specifically on short and branched chain acyl-CoA derivatives such as (S)-2-methylbutyryl-CoA as well as short straight chain acyl-CoAs such as butyryl-CoA. Plays an important role in the metabolism of L-isoleucine by catalyzing the dehydrogenation of 2-methylbutyryl-CoA, one of the steps of the L-isoleucine catabolic pathway. Can also act on valproyl-CoA, a metabolite of the valproic acid drug. The polypeptide is Short/branched chain specific acyl-CoA dehydrogenase, mitochondrial (ACADSB) (Pongo abelii (Sumatran orangutan)).